Consider the following 443-residue polypeptide: Phosphoribosylamine--glycine ligase (443 aa).

Residues 109 to 324 (RNLFKKYNIK…FLDVCFGISN (216 aa)) enclose the ATP-grasp domain. 140 to 202 (MTGLGKDVVV…EEKLVGVEFT (63 aa)) is a binding site for ATP. Gln282, Glu294, and Asn296 together coordinate Mg(2+). Positions 282, 294, and 296 each coordinate Mn(2+).

Belongs to the GARS family. Mg(2+) is required as a cofactor. The cofactor is Mn(2+).

The catalysed reaction is 5-phospho-beta-D-ribosylamine + glycine + ATP = N(1)-(5-phospho-beta-D-ribosyl)glycinamide + ADP + phosphate + H(+). It participates in purine metabolism; IMP biosynthesis via de novo pathway; N(1)-(5-phospho-D-ribosyl)glycinamide from 5-phospho-alpha-D-ribose 1-diphosphate: step 2/2. The chain is Phosphoribosylamine--glycine ligase from Methanococcus vannielii (strain ATCC 35089 / DSM 1224 / JCM 13029 / OCM 148 / SB).